Consider the following 362-residue polypeptide: Caveolae-associated protein 4 (362 aa).

Positions 1 to 24 are disordered; it reads MEHNGSASNAGKIHQNRLSSVTED. The stretch at 100–120 forms a coiled coil; the sequence is IKDVKARVEKQQVRVTKVETK. Phosphoserine occurs at positions 152, 171, and 172. Composition is skewed to basic and acidic residues over residues 230 to 255, 275 to 289, and 305 to 320; these read RERLRQSGERLRQSGERLRQSGERFK, KAKDPKAEGQEVDRG, and HEFHSDEFSETEKEVT. Disordered stretches follow at residues 230–289 and 305–346; these read RERL…VDRG and HEFH…KPQV. Y324 carries the post-translational modification Phosphotyrosine. T334 carries the phosphothreonine modification. S353 bears the Phosphoserine mark.

The protein belongs to the CAVIN family. In terms of assembly, component of the CAVIN complex composed of CAVIN1, CAVIN2, CAVIN3 and CAVIN4. Interacts with CAVIN1. Interacts with CAVIN2; this augments the transactivation of NPPA. Interacts with CAV3, ADRA1A, ADRA1B, MAPK1 and MAPK3. Abundantly expressed in cardiac and skeletal muscle (at protein level). Weaker expression in aorta and lung. In heart, expressed in cardiomyocytes and vascular smooth muscle cells but not in other surrounding cells including vascular endothelial cells.

Its subcellular location is the cytoplasm. It localises to the myofibril. The protein resides in the sarcomere. It is found in the cytosol. The protein localises to the membrane. Its subcellular location is the caveola. It localises to the cell membrane. The protein resides in the sarcolemma. Modulates the morphology of formed caveolae in cardiomyocytes, but is not required for caveolar formation. Facilitates the recruitment of MAPK1/3 to caveolae within cardiomyocytes and regulates alpha-1 adrenergic receptor-induced hypertrophic responses in cardiomyocytes through MAPK1/3 activation. Contributes to proper membrane localization and stabilization of caveolin-3 (CAV3) in cardiomyocytes. Induces RHOA activation and activates NPPA transcription and myofibrillar organization through the Rho/ROCK signaling pathway. The protein is Caveolae-associated protein 4 (Cavin4) of Mus musculus (Mouse).